Here is a 968-residue protein sequence, read N- to C-terminus: RNA polymerase-associated protein RapA (968 aa).

In terms of domain architecture, Helicase ATP-binding spans 163–332; sequence EVGSRYAPRV…FARLRLLDPD (170 aa). 176–183 lines the ATP pocket; sequence DEVGLGKT. The DEAH box motif lies at 278 to 281; the sequence is DEAH. Positions 491–655 constitute a Helicase C-terminal domain; sequence RVDWLIEFLK…EFADELINVL (165 aa).

The protein belongs to the SNF2/RAD54 helicase family. RapA subfamily. Interacts with the RNAP. Has a higher affinity for the core RNAP than for the holoenzyme. Its ATPase activity is stimulated by binding to RNAP.

Transcription regulator that activates transcription by stimulating RNA polymerase (RNAP) recycling in case of stress conditions such as supercoiled DNA or high salt concentrations. Probably acts by releasing the RNAP, when it is trapped or immobilized on tightly supercoiled DNA. Does not activate transcription on linear DNA. Probably not involved in DNA repair. This chain is RNA polymerase-associated protein RapA, found in Shewanella frigidimarina (strain NCIMB 400).